Reading from the N-terminus, the 358-residue chain is Sulfoquinovosyl glycerol transport ATP-binding protein SmoE (358 aa).

An ABC transporter domain is found at 4-234 (VSLRKLDKSY…PESVFVGGFV (231 aa)). Residue 36–43 (GPSGCGKS) participates in ATP binding.

This sequence belongs to the ABC transporter superfamily. The complex is probably composed of two ATP-binding proteins (SmoE), two transmembrane proteins (SmoG and SmoH) and a solute-binding protein (SmoF).

Its subcellular location is the cell inner membrane. Functionally, part of the ABC transporter complex SmoEFGH involved in sulfoquinovosyl glycerol (SQGro) uptake. Responsible for energy coupling to the transport system. The protein is Sulfoquinovosyl glycerol transport ATP-binding protein SmoE of Agrobacterium fabrum (strain C58 / ATCC 33970) (Agrobacterium tumefaciens (strain C58)).